A 374-amino-acid polypeptide reads, in one-letter code: uncharacterized protein (374 aa).

This is an uncharacterized protein from Methanocaldococcus jannaschii (strain ATCC 43067 / DSM 2661 / JAL-1 / JCM 10045 / NBRC 100440) (Methanococcus jannaschii).